The following is a 167-amino-acid chain: Phosphopantetheine adenylyltransferase (167 aa).

Position 13 (threonine 13) interacts with substrate. ATP contacts are provided by residues 13 to 14 and histidine 21; that span reads TF. Residues lysine 45, leucine 78, and arginine 92 each coordinate substrate. Residues 93 to 95, glutamate 103, and 128 to 134 each bind ATP; these read GLR and TQFISSS.

The protein belongs to the bacterial CoaD family. Homohexamer. The cofactor is Mg(2+).

The protein resides in the cytoplasm. The enzyme catalyses (R)-4'-phosphopantetheine + ATP + H(+) = 3'-dephospho-CoA + diphosphate. It participates in cofactor biosynthesis; coenzyme A biosynthesis; CoA from (R)-pantothenate: step 4/5. Its function is as follows. Reversibly transfers an adenylyl group from ATP to 4'-phosphopantetheine, yielding dephospho-CoA (dPCoA) and pyrophosphate. This chain is Phosphopantetheine adenylyltransferase, found in Wolbachia sp. subsp. Brugia malayi (strain TRS).